A 190-amino-acid polypeptide reads, in one-letter code: RNA pyrophosphohydrolase (190 aa).

The region spanning 6 to 149 (GYRPNVGIVL…KRGVYARALC (144 aa)) is the Nudix hydrolase domain. Residues 38–59 (GGMHSDETPVEAMYRELNEETG) carry the Nudix box motif.

Belongs to the Nudix hydrolase family. RppH subfamily. A divalent metal cation serves as cofactor.

Functionally, accelerates the degradation of transcripts by removing pyrophosphate from the 5'-end of triphosphorylated RNA, leading to a more labile monophosphorylated state that can stimulate subsequent ribonuclease cleavage. The polypeptide is RNA pyrophosphohydrolase (Xylella fastidiosa (strain 9a5c)).